The following is a 171-amino-acid chain: Ly6/PLAUR domain-containing protein 6 (171 aa).

Residues 1–25 (MEPSPALAWLLLLSLVADCLKAAQS) form the signal peptide. Residues 47 to 141 (FKCFTCEKAA…PRNDTDATFA (95 aa)) enclose the UPAR/Ly6 domain. 6 disulfide bridges follow: cysteine 49/cysteine 77, cysteine 52/cysteine 61, cysteine 70/cysteine 96, cysteine 102/cysteine 121, cysteine 107/cysteine 118, and cysteine 122/cysteine 127. The short motif at 88-90 (NSI) is the NxI motif element. N-linked (GlcNAc...) asparagine glycans are attached at residues asparagine 134 and asparagine 147. The GPI-anchor amidated asparagine moiety is linked to residue asparagine 147. Positions 148–171 (QTNGHPHCVSVIVSCLWVWLGLTL) are cleaved as a propeptide — removed in mature form.

In terms of assembly, interacts with nicotinic acetylcholine receptors (nAChRs) including CHRNA3, CHRNA4, CHRNA5, CHRNA6, CHRNA7, CHRNB2 and CHRNB4. Interacts (via NxI motif) with LRP6. In terms of tissue distribution, expressed at high levels in the cortex and cerebellum of the brain, at moderate levels in the lung, kidney, and liver, and at low levels in the heart and prostate (at protein level). Expressed in neurons (at protein level).

Its subcellular location is the secreted. It is found in the cytoplasm. The protein resides in the cell membrane. It localises to the synapse. The protein localises to the synaptosome. Its subcellular location is the membrane raft. It is found in the cell projection. The protein resides in the dendrite. It localises to the perikaryon. Acts as a modulator of nicotinic acetylcholine receptors (nAChRs) function in the brain. Inhibits nicotine-induced Ca(2+) influx through nAChRs. In vitro, specifically inhibits alpha-3:beta-4 and alpha-7 nAChR currents in an allosteric manner. Acts as a positive regulator of Wnt/beta-catenin signaling. The chain is Ly6/PLAUR domain-containing protein 6 (Lypd6) from Rattus norvegicus (Rat).